The chain runs to 351 residues: ADP-glucose phosphorylase (351 aa).

The tract at residues 1–63 (MTSPSHASDR…QNPNPKPSSC (63 aa)) is disordered. Residue 41-44 (RAKR) participates in ADP-alpha-D-glucose binding. Zn(2+) contacts are provided by cysteine 63 and cysteine 66. ADP-alpha-D-glucose-binding positions include 72–74 (ECA) and asparagine 94. Histidine 133 contacts Zn(2+). Residues asparagine 173 and 179–182 (GASM) contribute to the ADP-alpha-D-glucose site. Histidine 184 provides a ligand contact to Zn(2+). Catalysis depends on histidine 186, which acts as the Tele-AMP-histidine intermediate. Glutamine 188 contacts ADP-alpha-D-glucose. Zn(2+) is bound by residues cysteine 216, cysteine 219, histidine 255, and histidine 310. ADP-alpha-D-glucose is bound by residues glycine 321 and 325-326 (FE).

This sequence belongs to the galactose-1-phosphate uridylyltransferase type 1 family. Homodimer. It depends on Zn(2+) as a cofactor.

The enzyme catalyses alpha-D-glucose 1-phosphate + ADP + H(+) = ADP-alpha-D-glucose + phosphate. In terms of biological role, catalyzes the conversion of ADP-glucose and inorganic phosphate (Pi) into glucose-1-phosphate and ADP. Does not possess galactose-1-phosphate uridylyltransferase activity. This Arabidopsis thaliana (Mouse-ear cress) protein is ADP-glucose phosphorylase.